The following is a 964-amino-acid chain: MKKAFFFFLIGNSLSGLAREVPSRIFLMPNSVPDPTKESLSNKISLTGDTHNLTNCYLDNLRYILAILQKTPNEGAAVTITDYLSFFDTQKEGIYFAKNLTPESGGAIGYASPNSPTVEIRDTIGPVIFENNTCCRLFTWRNPYAADKIREGGAIHAQNLYINHNHDVVGFMKNFSYVQGGAISTANTFVVSENQSCFLFMDNICIQTNTAGKGGAIYAGTSNSFESNNCDLFFINNACCAGGAIFSPICSLTGNRGNIVFYNNRCFKNVETASSEASDGGAIKVTTRLDVTGNRGRIFFSDNITKNYGGAIYAPVVTLVDNGPTYFINNIANNKGGAIYIDGTSNSKISADRHAIIFNENIVTNVTNANGTSTSANPPRRNAITVASSSGEILLGAGSSQNLIFYDPIEVSNAGVSVSFNKEADQTGSVVFSGATVNSADFHQRNLQTKTPAPLTLSNGFLCIEDHAQLTVNRFTQTGGVVSLGNGAVLSCYKNGTGDSASNASITLKHIGLNLSSILKSGAEIPLLWVEPTNNSNNYTADTAATFSLSDVKLSLIDDYGNSPYESTDLTHALSSQPMLSISEASDNQLQSENIDFSGLNVPHYGWQGLWTWGWAKTQDPEPASSATITDPQKANRFHRTLLLTWLPAGYVPSPKHRSPLIANTLWGNMLLATESLKNSAELTPSGHPFWGITGGGLGMMVYQDPRENHPGFHMRSSGYSAGMIAGQTHTFSLKFSQTYTKLNERYAKNNVSSKNYSCQGEMLFSLQEGFLLTKLVGLYSYGDHNCHHFYTQGENLTSQGTFRSQTMGGAVFFDLPMKPFGSTHILTAPFLGALGIYSSLSHFTEVGAYPRSFSTKTPLINVLVPIGVKGSFMNATHRPQAWTVELAYQPVLYRQEPGIAAQLLASKGIWFGSGSPSSRHAMSYKISQQTQPLSWLTLHFQYHGFYSSSTFCNYLNGEIALRF.

A signal peptide spans 1 to 18 (MKKAFFFFLIGNSLSGLA). Residues 683 to 964 (LTPSGHPFWG…YLNGEIALRF (282 aa)) enclose the Autotransporter domain.

Belongs to the PMP outer membrane protein family.

It is found in the secreted. Its subcellular location is the cell wall. The protein localises to the cell outer membrane. The polypeptide is Probable outer membrane protein PmpE (pmpE) (Chlamydia trachomatis serovar D (strain ATCC VR-885 / DSM 19411 / UW-3/Cx)).